An 832-amino-acid chain; its full sequence is Adhesin AWP2 (832 aa).

The first 25 residues, 1-25 (MRKLPLFMAWKFWLICLYIIKVAST), serve as a signal peptide directing secretion. Asn187, Asn290, Asn372, Asn390, Asn435, Asn448, Asn472, Asn482, Asn507, Asn512, Asn515, Asn534, Asn562, Asn579, Asn695, and Asn721 each carry an N-linked (GlcNAc...) asparagine glycan. The interval 722 to 747 (QTTSPSMHTTSLVGSENGVSAKTVND) is disordered.

It is found in the secreted. The protein localises to the cell wall. In terms of biological role, mediates cell-substrate adhesion and promotes biofilm formation. The sequence is that of Adhesin AWP2 from Candida glabrata (strain ATCC 2001 / BCRC 20586 / JCM 3761 / NBRC 0622 / NRRL Y-65 / CBS 138) (Yeast).